Here is a 717-residue protein sequence, read N- to C-terminus: MIYQSPTIEVELLEDNIAHLCFNAQGSVNKFDRETIDSLNAALDSIKQNNSIKGLMLTSAKPAFIVGADITEFLGLFAEEDAVLLSWLEEANVVFNKLEDLPFPTISAINGFALGAGCETILATDFRVADTTARIGLPETKLGIIPGFGGTVRLPRVVGTDNALEWITSGKDQRPEAALNVGAIDALVAPEQLQSAALKMLKDAIAEKLDWQTRRAKKLAPLTLPKLEAMMSFATAKGMVFKVAGKHYPAPMAVVSVIEKAAQLDRAGALKVEHQAFLKLAKTEVAQSLIGIFLNDQLVKGKAKKAGKLAKKVNSAAVLGAGIMGGGIAYQSASKGTPIVMKDIAQPALDLGLGEASKLLAAQVKRGRSNPAKMAAVLNNITPALDYAPVKAADVVVEAVVEHPKVKSMVLAEVEEHVSEDAIITSNTSTISINLLAKSLKKPERFCGMHFFNPVHKMPLVEVIRGEHSSDETVASVVAYASKMGKTPIVVNDCPGFFVNRVLFPYFAGFSGLLADGADFAAIDKVMEKQFGWPMGPAYLLDVVGLDTGHHAQAVMAEGFPERMGKTGKDAIDVMFEAERFGQKNNKGFYQYSVDRRGKPKKDLDPTSYELLQGEFGERKAFESDEIIARTMIPMIIETVRCLEEGIIASPAEADMGLVYGLGFPPFRGGVFRYLDTMGVANFVALADKYAHLGGLYQVTDAMRELAANNGSYYQQA.

The enoyl-CoA hydratase/isomerase stretch occupies residues 1–189; sequence MIYQSPTIEV…NVGAIDALVA (189 aa). Asp-296 serves as a coordination point for substrate. The tract at residues 311–717 is 3-hydroxyacyl-CoA dehydrogenase; sequence KKVNSAAVLG…ANNGSYYQQA (407 aa). NAD(+) contacts are provided by residues Met-324, Asp-343, 400 to 402, Lys-407, and Ser-429; that span reads VVE. The active-site For 3-hydroxyacyl-CoA dehydrogenase activity is His-450. Asn-453 is a binding site for NAD(+). Residues Asn-500 and Tyr-660 each contribute to the substrate site.

This sequence in the N-terminal section; belongs to the enoyl-CoA hydratase/isomerase family. In the C-terminal section; belongs to the 3-hydroxyacyl-CoA dehydrogenase family. Heterotetramer of two alpha chains (FadB) and two beta chains (FadA).

The enzyme catalyses a (3S)-3-hydroxyacyl-CoA + NAD(+) = a 3-oxoacyl-CoA + NADH + H(+). It carries out the reaction a (3S)-3-hydroxyacyl-CoA = a (2E)-enoyl-CoA + H2O. It catalyses the reaction a 4-saturated-(3S)-3-hydroxyacyl-CoA = a (3E)-enoyl-CoA + H2O. The catalysed reaction is (3S)-3-hydroxybutanoyl-CoA = (3R)-3-hydroxybutanoyl-CoA. The enzyme catalyses a (3Z)-enoyl-CoA = a 4-saturated (2E)-enoyl-CoA. It carries out the reaction a (3E)-enoyl-CoA = a 4-saturated (2E)-enoyl-CoA. Its pathway is lipid metabolism; fatty acid beta-oxidation. Functionally, involved in the aerobic and anaerobic degradation of long-chain fatty acids via beta-oxidation cycle. Catalyzes the formation of 3-oxoacyl-CoA from enoyl-CoA via L-3-hydroxyacyl-CoA. It can also use D-3-hydroxyacyl-CoA and cis-3-enoyl-CoA as substrate. This is Fatty acid oxidation complex subunit alpha from Shewanella piezotolerans (strain WP3 / JCM 13877).